The chain runs to 40 residues: Toxin CSTX-17 (40 aa).

Intrachain disulfides connect cysteine 2-cysteine 17, cysteine 9-cysteine 22, cysteine 16-cysteine 33, and cysteine 24-cysteine 31. Tryptophan 40 carries the post-translational modification Tryptophan amide.

Contains 4 disulfide bonds. Expressed by the venom gland.

The protein resides in the secreted. The sequence is that of Toxin CSTX-17 from Cupiennius salei (American wandering spider).